We begin with the raw amino-acid sequence, 271 residues long: Zinc finger CCHC domain-containing protein 9 (271 aa).

The interval M1–Y67 is disordered. The span at V7–S20 shows a compositional bias: polar residues. The span at E22–D33 shows a compositional bias: basic and acidic residues. The segment covering S35–R46 has biased composition (polar residues). Basic residues predominate over residues A56–K65. CCHC-type zinc fingers lie at residues M128 to A145, G155 to A172, A184 to D201, and G211 to E228.

Detected in brain cortex and in testis.

Its subcellular location is the nucleus. The protein localises to the nucleolus. In terms of biological role, may down-regulate transcription mediated by NF-kappa-B and the serum response element. The protein is Zinc finger CCHC domain-containing protein 9 (Zcchc9) of Mus musculus (Mouse).